We begin with the raw amino-acid sequence, 218 residues long: Envelope glycoprotein L (218 aa).

Residues 57–185 (KLVKATRLDF…LGPPPLGCFT (129 aa)) are interaction with gH. The region spanning 60–218 (KATRLDFTWG…ASYYANLQKT (159 aa)) is the gL alphaherpesvirus-type domain. Disulfide bonds link C81/C113 and C183/C206.

The protein belongs to the herpesviridae glycoprotein L (gL) family. Alphaherpesvirinae gL subfamily. As to quaternary structure, interacts with glycoprotein H (gH); this interaction is necessary for the correct processing and cell surface expression of gH. The heterodimer gH/gL seems to interact with gB trimers during fusion.

The protein resides in the virion membrane. It is found in the host cell membrane. Its subcellular location is the host Golgi apparatus. The protein localises to the host trans-Golgi network. The heterodimer glycoprotein H-glycoprotein L is required for the fusion of viral and plasma membranes leading to virus entry into the host cell. Acts as a functional inhibitor of gH and maintains gH in an inhibited form. Upon binding to host integrins, gL dissociates from gH leading to activation of the viral fusion glycoproteins gB and gH. This Equus caballus (Horse) protein is Envelope glycoprotein L.